A 131-amino-acid polypeptide reads, in one-letter code: D-ribose pyranase (131 aa).

H20 acts as the Proton donor in catalysis. Residues D28, H98, and 120–122 each bind substrate; that span reads YAN.

The protein belongs to the RbsD / FucU family. RbsD subfamily. Homodecamer.

The protein resides in the cytoplasm. It catalyses the reaction beta-D-ribopyranose = beta-D-ribofuranose. It participates in carbohydrate metabolism; D-ribose degradation; D-ribose 5-phosphate from beta-D-ribopyranose: step 1/2. Functionally, catalyzes the interconversion of beta-pyran and beta-furan forms of D-ribose. The sequence is that of D-ribose pyranase from Bacillus cereus (strain ATCC 14579 / DSM 31 / CCUG 7414 / JCM 2152 / NBRC 15305 / NCIMB 9373 / NCTC 2599 / NRRL B-3711).